Here is a 592-residue protein sequence, read N- to C-terminus: N-acetyltransferase ESCO2 (592 aa).

A phosphoserine mark is found at Ser-41 and Ser-85. A disordered region spans residues 267-294; the sequence is KSSVKVQNARSKNEEKLRKNPSGAVVSS. Ser-309 is modified (phosphoserine). Residues 384 to 408 form a CCHH-type zinc finger; that stretch reads TVCKSCGMIYTASNPEDEIQHLQHH.

The protein belongs to the acetyltransferase family. ECO subfamily.

It is found in the nucleus. Its subcellular location is the chromosome. The catalysed reaction is L-lysyl-[protein] + acetyl-CoA = N(6)-acetyl-L-lysyl-[protein] + CoA + H(+). In terms of biological role, acetyltransferase required for the establishment of sister chromatid cohesion. Couples the processes of cohesion and DNA replication to ensure that only sister chromatids become paired together. In contrast to the structural cohesins, the deposition and establishment factors are required only during the S phase. Acetylates the cohesin component SMC3. The protein is N-acetyltransferase ESCO2 (Esco2) of Mus musculus (Mouse).